The sequence spans 180 residues: Cytochrome b6-f complex subunit 4 (180 aa).

3 helical membrane passes run 36–56, 95–115, and 131–151; these read LSYI…GLAV, LLGV…PFLE, and TVSL…ALPI.

It belongs to the cytochrome b family. PetD subfamily. In terms of assembly, the 4 large subunits of the cytochrome b6-f complex are cytochrome b6, subunit IV (17 kDa polypeptide, petD), cytochrome f and the Rieske protein, while the 4 small subunits are petG, petL, petM and petN. The complex functions as a dimer.

Its subcellular location is the plastid. It is found in the chloroplast thylakoid membrane. Component of the cytochrome b6-f complex, which mediates electron transfer between photosystem II (PSII) and photosystem I (PSI), cyclic electron flow around PSI, and state transitions. This chain is Cytochrome b6-f complex subunit 4, found in Pinus thunbergii (Japanese black pine).